Consider the following 1052-residue polypeptide: RTX-III toxin determinant A from serotype 8 (1052 aa).

The next 3 helical transmembrane spans lie at 248–265, 275–334, and 372–418; these read GLDI…SFAL, KVAA…LRVA, and DASI…GILE. 6 Hemolysin-type calcium-binding repeats span residues 744–761, 762–779, 780–797, 798–815, 826–843, and 844–861; these read KGSK…DDLL, NGND…NDEL, RGDN…NDKL, LGGN…NDEL, RGGK…SDLL, and DGGE…SDFY.

It belongs to the RTX prokaryotic toxin (TC 1.C.11) family. Post-translationally, palmitoylated by ApxIIIC. The toxin only becomes active when modified.

It is found in the secreted. It localises to the host cell membrane. In terms of biological role, does not have hemolytic activity but shows a strong cytotoxicity towards alveolar macrophages and neutrophils. The protein is RTX-III toxin determinant A from serotype 8 (apxIIIA) of Actinobacillus pleuropneumoniae (Haemophilus pleuropneumoniae).